Reading from the N-terminus, the 499-residue chain is ATP synthase subunit alpha, chloroplastic (499 aa).

ATP is bound at residue 170 to 177 (GDRQTGKT).

Belongs to the ATPase alpha/beta chains family. In terms of assembly, F-type ATPases have 2 components, CF(1) - the catalytic core - and CF(0) - the membrane proton channel. CF(1) has five subunits: alpha(3), beta(3), gamma(1), delta(1), epsilon(1). CF(0) has four main subunits: a, b, b' and c.

It localises to the plastid. The protein localises to the chloroplast thylakoid membrane. It catalyses the reaction ATP + H2O + 4 H(+)(in) = ADP + phosphate + 5 H(+)(out). Produces ATP from ADP in the presence of a proton gradient across the membrane. The alpha chain is a regulatory subunit. The protein is ATP synthase subunit alpha, chloroplastic of Emiliania huxleyi (Coccolithophore).